The sequence spans 130 residues: Large ribosomal subunit protein bL12 (130 aa).

Belongs to the bacterial ribosomal protein bL12 family. In terms of assembly, homodimer. Part of the ribosomal stalk of the 50S ribosomal subunit. Forms a multimeric L10(L12)X complex, where L10 forms an elongated spine to which 2 to 4 L12 dimers bind in a sequential fashion. Binds GTP-bound translation factors.

Functionally, forms part of the ribosomal stalk which helps the ribosome interact with GTP-bound translation factors. Is thus essential for accurate translation. This chain is Large ribosomal subunit protein bL12, found in Prochlorococcus marinus (strain SARG / CCMP1375 / SS120).